Here is a 449-residue protein sequence, read N- to C-terminus: CCA-adding enzyme (449 aa).

ATP-binding residues include Ser-57 and Arg-60. Residues Ser-57 and Arg-60 each contribute to the CTP site. Mg(2+) contacts are provided by Asp-69, Asp-71, and Asp-124. ATP is bound by residues His-147, Lys-167, and Tyr-176. 3 residues coordinate CTP: His-147, Lys-167, and Tyr-176.

Belongs to the tRNA nucleotidyltransferase/poly(A) polymerase family. Archaeal CCA-adding enzyme subfamily. As to quaternary structure, homodimer. Mg(2+) is required as a cofactor.

The enzyme catalyses a tRNA precursor + 2 CTP + ATP = a tRNA with a 3' CCA end + 3 diphosphate. It carries out the reaction a tRNA with a 3' CCA end + 2 CTP + ATP = a tRNA with a 3' CCACCA end + 3 diphosphate. Catalyzes the addition and repair of the essential 3'-terminal CCA sequence in tRNAs without using a nucleic acid template. Adds these three nucleotides in the order of C, C, and A to the tRNA nucleotide-73, using CTP and ATP as substrates and producing inorganic pyrophosphate. tRNA 3'-terminal CCA addition is required both for tRNA processing and repair. Also involved in tRNA surveillance by mediating tandem CCA addition to generate a CCACCA at the 3' terminus of unstable tRNAs. While stable tRNAs receive only 3'-terminal CCA, unstable tRNAs are marked with CCACCA and rapidly degraded. This Methanocaldococcus jannaschii (strain ATCC 43067 / DSM 2661 / JAL-1 / JCM 10045 / NBRC 100440) (Methanococcus jannaschii) protein is CCA-adding enzyme.